The primary structure comprises 113 residues: MEVKASARFVRIAPRKVRVVIDLVRGKSVNEALALLKFIPKRASEPVAKVIASAAANAEHNFSLNKDNLYIAKAYVDQGPTLKRYHPRQRGQAFPILKRTSHITVVVKEKEAK.

It belongs to the universal ribosomal protein uL22 family. In terms of assembly, part of the 50S ribosomal subunit.

Its function is as follows. This protein binds specifically to 23S rRNA; its binding is stimulated by other ribosomal proteins, e.g. L4, L17, and L20. It is important during the early stages of 50S assembly. It makes multiple contacts with different domains of the 23S rRNA in the assembled 50S subunit and ribosome. The globular domain of the protein is located near the polypeptide exit tunnel on the outside of the subunit, while an extended beta-hairpin is found that lines the wall of the exit tunnel in the center of the 70S ribosome. This chain is Large ribosomal subunit protein uL22, found in Symbiobacterium thermophilum (strain DSM 24528 / JCM 14929 / IAM 14863 / T).